We begin with the raw amino-acid sequence, 523 residues long: GMP synthase [glutamine-hydrolyzing] (523 aa).

Residues Lys-8–Asn-205 enclose the Glutamine amidotransferase type-1 domain. Catalysis depends on Cys-85, which acts as the Nucleophile. Active-site residues include His-179 and Glu-181. In terms of domain architecture, GMPS ATP-PPase spans Trp-206–Arg-398. Ser-233–Ser-239 provides a ligand contact to ATP.

In terms of assembly, homodimer.

The enzyme catalyses XMP + L-glutamine + ATP + H2O = GMP + L-glutamate + AMP + diphosphate + 2 H(+). It functions in the pathway purine metabolism; GMP biosynthesis; GMP from XMP (L-Gln route): step 1/1. In terms of biological role, catalyzes the synthesis of GMP from XMP. The sequence is that of GMP synthase [glutamine-hydrolyzing] from Mannheimia succiniciproducens (strain KCTC 0769BP / MBEL55E).